The primary structure comprises 182 residues: WUSCHEL-related homeobox 5 (182 aa).

Positions 1 to 24 (MSFSVKGRSLRGNNNGGTGTKCGR) are disordered. The homeobox; WUS-type DNA-binding region spans 20–84 (TKCGRWNPTV…NHKARERQKR (65 aa)).

Belongs to the WUS homeobox family. As to expression, specifically expressed in the central cells of a quiescent center (QC) of the root.

It is found in the nucleus. Its function is as follows. Transcription factor, which may be involved in the specification and maintenance of the stem cells (QC cells) in the root apical meristem (RAM). The chain is WUSCHEL-related homeobox 5 (WOX5) from Arabidopsis thaliana (Mouse-ear cress).